Here is an 86-residue protein sequence, read N- to C-terminus: Beta-toxin To4 (86 aa).

A signal peptide spans 1-20 (MTRFVLFISCFFLIGMIVEC). One can recognise an LCN-type CS-alpha/beta domain in the interval 21-83 (KDGYLMEYGG…IWNRATNKCG (63 aa)). 4 disulfides stabilise this stretch: cysteine 31–cysteine 82, cysteine 35–cysteine 57, cysteine 43–cysteine 63, and cysteine 47–cysteine 65. Cysteine 82 is subject to Cysteine amide.

Belongs to the long (4 C-C) scorpion toxin superfamily. Sodium channel inhibitor family. Beta subfamily. In terms of tissue distribution, expressed by the venom gland.

The protein localises to the secreted. Beta toxins bind voltage-independently at site-4 of sodium channels (Nav) and shift the voltage of activation toward more negative potentials thereby affecting sodium channel activation and promoting spontaneous and repetitive firing. This toxin shows moderate inhibition of Nav1.1/SCN1A, Nav1.2/SCN2A, and Nav1.4/SCN4A, and promotes a left voltage shift on these channels. It exhibits similar potency on Nav1.2/SCN2A and Nav1.4/SCN4A (40-50% peak current inhibition at 0.5 uM), and weaker inhibition on Nav1.2 (20-30% peak current inhibition at 0.5 uM). This chain is Beta-toxin To4, found in Tityus obscurus (Amazonian scorpion).